The following is a 451-amino-acid chain: Homeobox protein meis3-B (451 aa).

Residues 33–64 (HHSLSQSTPYGSTGAAHRVPMPPGMGSNDGLK) form a disordered region. Residues 34–43 (HSLSQSTPYG) show a composition bias toward polar residues. Positions 102–185 (GGDVCSSDSF…PIDLVIDDRD (84 aa)) constitute an MEIS N-terminal domain. Residues 206-272 (NNTWIRDHDE…RDKKRNKKRG (67 aa)) form a disordered region. Residues 218–230 (STHSGTPGPSSGG) show a composition bias toward low complexity. Residues 231-242 (LASQSGDNSSEQ) are compositionally biased toward polar residues. A DNA-binding region (homeobox) is located at residues 267-329 (RNKKRGIFPK…NARRRIVQPM (63 aa)).

The protein belongs to the TALE/MEIS homeobox family.

It is found in the nucleus. Functionally, a caudalizing protein which is required to pattern the anterior/posterior (A/P) axis during central nervous system (CNS) formation. Inhibits anterior neural expression and acts as a transcriptional activator to induce posterior neural gene expression. Maintains a proper A/P balance required for hindbrain formation by activating the FGF/MAPK pathway, which modulates the planar cell polarity (PCP) pathway. Interacts with retinoid signaling during hindbrain patterning. The chain is Homeobox protein meis3-B (meis3-b) from Xenopus laevis (African clawed frog).